A 274-amino-acid polypeptide reads, in one-letter code: MKIELASSYGFCFGVKRAIKIAENAGDAATIGPLIHNNEEISRLEKNYNVKTLEGIDELKDEKKAIIRTHGITKNDLAELKKTDIKVIDATCPFVTKPQQICEKMSEEGYDVVIFGDMHHPEVKGVKSYAKGNVYVVLEESELEGIKFKQKVALVSQTTRKVEKFMQIANYLMLHVKELRVFNTICNATFENQEAAKNLAKRADVMIIIGGKNSSNTKQLYLISKNFCEDSYLIESEEELERSWFDGKNLCGISAGASTPDWIIQKVVDRIKKV.

Cys12 is a [4Fe-4S] cluster binding site. (2E)-4-hydroxy-3-methylbut-2-enyl diphosphate is bound by residues His36 and His70. Residues His36 and His70 each contribute to the dimethylallyl diphosphate site. Positions 36 and 70 each coordinate isopentenyl diphosphate. Cys92 is a [4Fe-4S] cluster binding site. His120 serves as a coordination point for (2E)-4-hydroxy-3-methylbut-2-enyl diphosphate. His120 provides a ligand contact to dimethylallyl diphosphate. Residue His120 coordinates isopentenyl diphosphate. The active-site Proton donor is Glu122. Thr158 lines the (2E)-4-hydroxy-3-methylbut-2-enyl diphosphate pocket. Cys186 lines the [4Fe-4S] cluster pocket. Residues Ser214, Ser215, Asn216, and Ser258 each coordinate (2E)-4-hydroxy-3-methylbut-2-enyl diphosphate. The dimethylallyl diphosphate site is built by Ser214, Ser215, Asn216, and Ser258. Residues Ser214, Ser215, Asn216, and Ser258 each contribute to the isopentenyl diphosphate site.

This sequence belongs to the IspH family. [4Fe-4S] cluster is required as a cofactor.

The catalysed reaction is isopentenyl diphosphate + 2 oxidized [2Fe-2S]-[ferredoxin] + H2O = (2E)-4-hydroxy-3-methylbut-2-enyl diphosphate + 2 reduced [2Fe-2S]-[ferredoxin] + 2 H(+). It carries out the reaction dimethylallyl diphosphate + 2 oxidized [2Fe-2S]-[ferredoxin] + H2O = (2E)-4-hydroxy-3-methylbut-2-enyl diphosphate + 2 reduced [2Fe-2S]-[ferredoxin] + 2 H(+). It functions in the pathway isoprenoid biosynthesis; dimethylallyl diphosphate biosynthesis; dimethylallyl diphosphate from (2E)-4-hydroxy-3-methylbutenyl diphosphate: step 1/1. Its pathway is isoprenoid biosynthesis; isopentenyl diphosphate biosynthesis via DXP pathway; isopentenyl diphosphate from 1-deoxy-D-xylulose 5-phosphate: step 6/6. Catalyzes the conversion of 1-hydroxy-2-methyl-2-(E)-butenyl 4-diphosphate (HMBPP) into a mixture of isopentenyl diphosphate (IPP) and dimethylallyl diphosphate (DMAPP). Acts in the terminal step of the DOXP/MEP pathway for isoprenoid precursor biosynthesis. The chain is 4-hydroxy-3-methylbut-2-enyl diphosphate reductase from Campylobacter concisus (strain 13826).